The chain runs to 399 residues: F-box protein At1g30790 (399 aa).

One can recognise an F-box domain in the interval 3 to 49 (RQEIDHIPFDLTVEILTRLPAKSLMKFKCVSKLWSSIIHNQSFIDSF).

The protein is F-box protein At1g30790 of Arabidopsis thaliana (Mouse-ear cress).